The sequence spans 97 residues: Integration host factor subunit alpha (97 aa).

This sequence belongs to the bacterial histone-like protein family. In terms of assembly, heterodimer of an alpha and a beta chain.

This protein is one of the two subunits of integration host factor, a specific DNA-binding protein that functions in genetic recombination as well as in transcriptional and translational control. The sequence is that of Integration host factor subunit alpha from Hydrogenovibrio crunogenus (strain DSM 25203 / XCL-2) (Thiomicrospira crunogena).